Here is a 43-residue protein sequence, read N- to C-terminus: Potassium channel toxin gamma-KTx 3.2 (43 aa).

4 disulfide bridges follow: C5–C23, C11–C34, C20–C39, and C24–C41.

The protein belongs to the ergtoxin family. Gamma-KTx 3 subfamily. As to expression, expressed by the venom gland.

The protein localises to the secreted. Functionally, blocks Kv11/ERG potassium channels. This Centruroides elegans (Bark scorpion) protein is Potassium channel toxin gamma-KTx 3.2.